Here is a 157-residue protein sequence, read N- to C-terminus: UPF0262 protein RL0614 (157 aa).

Belongs to the UPF0262 family.

The protein is UPF0262 protein RL0614 of Rhizobium johnstonii (strain DSM 114642 / LMG 32736 / 3841) (Rhizobium leguminosarum bv. viciae).